An 85-amino-acid chain; its full sequence is Beta-insect depressant toxin Lqh-dprIT3a (85 aa).

Residues 1–21 (MKLLLLLTISASMLIEGLVNA) form the signal peptide. In terms of domain architecture, LCN-type CS-alpha/beta spans 22-82 (DGYIRGGDGC…EWDYETNTCG (61 aa)). 4 cysteine pairs are disulfide-bonded: Cys-31-Cys-81, Cys-35-Cys-56, Cys-42-Cys-63, and Cys-46-Cys-65. At Gly-82 the chain carries Glycine amide.

It belongs to the long (4 C-C) scorpion toxin superfamily. Sodium channel inhibitor family. Beta subfamily. As to expression, expressed by the venom gland.

Its subcellular location is the secreted. Functionally, depressant insect beta-toxins cause a transient contraction paralysis followed by a slow flaccid paralysis. They bind voltage-independently at site-4 of sodium channels (Nav) and block action potentials, primarily by depolarizing the axonal membrane and suppressing the sodium current. This depressant toxin is active only on insects. It is found in a relatively small amount in the venom, and its activity on insects is 10-fold higher compared to other known depressant toxins. The chain is Beta-insect depressant toxin Lqh-dprIT3a from Leiurus hebraeus (Hebrew deathstalker scorpion).